The following is a 165-amino-acid chain: MDPVNFIKTYAPRGSIIFINYTMSLTSHLNPSIEKHVGIYYGTLLSEHLVVESTYRKGVRIVPLDSFFEGYLSAKVYMLENIQVMKIAADTSLTLLGIPYGFGHNRMYCFKLVADCYKNAGVETSSKRILGKDIFLSQNFTDDNRWIKIYDSNNLTFWQIDYLKG.

It belongs to the orthopoxvirus OPG091 family.

The protein localises to the virion. It localises to the host cytoplasm. Functionally, contributes to vaccinia virus virulence in mice but not to replication in cell culture. The polypeptide is Protein OPG091 (OPG091) (Homo sapiens (Human)).